The primary structure comprises 242 residues: Uridylate kinase (242 aa).

K11–G14 provides a ligand contact to ATP. G53 lines the UMP pocket. ATP contacts are provided by G54 and R58. UMP-binding positions include D73 and S134–T141. ATP contacts are provided by T161, Y167, and D170.

This sequence belongs to the UMP kinase family. As to quaternary structure, homohexamer.

It localises to the cytoplasm. It catalyses the reaction UMP + ATP = UDP + ADP. The protein operates within pyrimidine metabolism; CTP biosynthesis via de novo pathway; UDP from UMP (UMPK route): step 1/1. With respect to regulation, inhibited by UTP. In terms of biological role, catalyzes the reversible phosphorylation of UMP to UDP. The sequence is that of Uridylate kinase from Thermosynechococcus vestitus (strain NIES-2133 / IAM M-273 / BP-1).